The sequence spans 307 residues: 4-hydroxy-3-methylbut-2-enyl diphosphate reductase (307 aa).

Position 13 (Cys13) interacts with [4Fe-4S] cluster. The (2E)-4-hydroxy-3-methylbut-2-enyl diphosphate site is built by His42 and His75. Residues His42 and His75 each coordinate dimethylallyl diphosphate. Residues His42 and His75 each contribute to the isopentenyl diphosphate site. [4Fe-4S] cluster is bound at residue Cys97. Residue His125 participates in (2E)-4-hydroxy-3-methylbut-2-enyl diphosphate binding. His125 is a binding site for dimethylallyl diphosphate. Position 125 (His125) interacts with isopentenyl diphosphate. The active-site Proton donor is Glu127. Thr165 contacts (2E)-4-hydroxy-3-methylbut-2-enyl diphosphate. Cys195 contributes to the [4Fe-4S] cluster binding site. Residues Ser223, Ser224, Asn225, and Ser267 each contribute to the (2E)-4-hydroxy-3-methylbut-2-enyl diphosphate site. Dimethylallyl diphosphate contacts are provided by Ser223, Ser224, Asn225, and Ser267. Ser223, Ser224, Asn225, and Ser267 together coordinate isopentenyl diphosphate.

This sequence belongs to the IspH family. The cofactor is [4Fe-4S] cluster.

The catalysed reaction is isopentenyl diphosphate + 2 oxidized [2Fe-2S]-[ferredoxin] + H2O = (2E)-4-hydroxy-3-methylbut-2-enyl diphosphate + 2 reduced [2Fe-2S]-[ferredoxin] + 2 H(+). The enzyme catalyses dimethylallyl diphosphate + 2 oxidized [2Fe-2S]-[ferredoxin] + H2O = (2E)-4-hydroxy-3-methylbut-2-enyl diphosphate + 2 reduced [2Fe-2S]-[ferredoxin] + 2 H(+). It functions in the pathway isoprenoid biosynthesis; dimethylallyl diphosphate biosynthesis; dimethylallyl diphosphate from (2E)-4-hydroxy-3-methylbutenyl diphosphate: step 1/1. Its pathway is isoprenoid biosynthesis; isopentenyl diphosphate biosynthesis via DXP pathway; isopentenyl diphosphate from 1-deoxy-D-xylulose 5-phosphate: step 6/6. In terms of biological role, catalyzes the conversion of 1-hydroxy-2-methyl-2-(E)-butenyl 4-diphosphate (HMBPP) into a mixture of isopentenyl diphosphate (IPP) and dimethylallyl diphosphate (DMAPP). Acts in the terminal step of the DOXP/MEP pathway for isoprenoid precursor biosynthesis. The chain is 4-hydroxy-3-methylbut-2-enyl diphosphate reductase from Chlamydia trachomatis serovar L2 (strain ATCC VR-902B / DSM 19102 / 434/Bu).